The following is a 362-amino-acid chain: Carbamoyl phosphate synthase pyrimidine-specific small chain (362 aa).

Residues Met1–Pro168 form a CPSase region. Residues Ser45, Gly219, and Gly221 each coordinate L-glutamine. Positions Arg171 to Arg358 constitute a Glutamine amidotransferase type-1 domain. Catalysis depends on Cys246, which acts as the Nucleophile. L-glutamine is bound by residues Leu247, Gln250, Asn288, Gly290, and Tyr291. Residues His331 and Glu333 contribute to the active site.

It belongs to the CarA family. Composed of two chains; the small (or glutamine) chain promotes the hydrolysis of glutamine to ammonia, which is used by the large (or ammonia) chain to synthesize carbamoyl phosphate. Tetramer of heterodimers (alpha,beta)4.

It carries out the reaction hydrogencarbonate + L-glutamine + 2 ATP + H2O = carbamoyl phosphate + L-glutamate + 2 ADP + phosphate + 2 H(+). The catalysed reaction is L-glutamine + H2O = L-glutamate + NH4(+). Its pathway is pyrimidine metabolism; UMP biosynthesis via de novo pathway; (S)-dihydroorotate from bicarbonate: step 1/3. Functionally, small subunit of the glutamine-dependent carbamoyl phosphate synthetase (CPSase). CPSase catalyzes the formation of carbamoyl phosphate from the ammonia moiety of glutamine, carbonate, and phosphate donated by ATP, constituting the first step of the biosynthetic pathway leading to pyrimidine nucleotides. The small subunit (glutamine amidotransferase) binds and cleaves glutamine to supply the large subunit with the substrate ammonia. The sequence is that of Carbamoyl phosphate synthase pyrimidine-specific small chain from Halalkalibacterium halodurans (strain ATCC BAA-125 / DSM 18197 / FERM 7344 / JCM 9153 / C-125) (Bacillus halodurans).